We begin with the raw amino-acid sequence, 336 residues long: Dihydroorotate dehydrogenase (quinone) (336 aa).

FMN-binding positions include 62 to 66 (AGLDK) and threonine 86. Residue lysine 66 coordinates substrate. Residue 111 to 115 (NRMGF) coordinates substrate. Residues asparagine 139 and asparagine 172 each coordinate FMN. Residue asparagine 172 coordinates substrate. Serine 175 (nucleophile) is an active-site residue. Residue asparagine 177 participates in substrate binding. Lysine 217 and threonine 245 together coordinate FMN. 246-247 (NT) provides a ligand contact to substrate. Residues glycine 268, glycine 297, and 318-319 (YS) each bind FMN.

The protein belongs to the dihydroorotate dehydrogenase family. Type 2 subfamily. As to quaternary structure, monomer. FMN serves as cofactor.

It localises to the cell membrane. The enzyme catalyses (S)-dihydroorotate + a quinone = orotate + a quinol. The protein operates within pyrimidine metabolism; UMP biosynthesis via de novo pathway; orotate from (S)-dihydroorotate (quinone route): step 1/1. Its function is as follows. Catalyzes the conversion of dihydroorotate to orotate with quinone as electron acceptor. This Hamiltonella defensa subsp. Acyrthosiphon pisum (strain 5AT) protein is Dihydroorotate dehydrogenase (quinone).